Here is a 308-residue protein sequence, read N- to C-terminus: UPF0282 protein YG5714_2245 (308 aa).

The protein belongs to the UPF0282 family.

In Saccharolobus islandicus (strain Y.G.57.14 / Yellowstone #1) (Sulfolobus islandicus), this protein is UPF0282 protein YG5714_2245.